A 773-amino-acid chain; its full sequence is uncharacterized protein (773 aa).

The disordered stretch occupies residues 192–219 (EASGTNNNPKEIEMNSDTTSSVPKSGST).

The protein localises to the cytoplasm. This is an uncharacterized protein from Schizosaccharomyces pombe (strain 972 / ATCC 24843) (Fission yeast).